Consider the following 340-residue polypeptide: DNA-directed RNA polymerase subunit alpha (340 aa).

The interval 1–233 (MYKNWRDLIR…EQLSIFINFD (233 aa)) is alpha N-terminal domain (alpha-NTD). The interval 246 to 340 (DEIDKINENL…RLRGEQNEEE (95 aa)) is alpha C-terminal domain (alpha-CTD).

This sequence belongs to the RNA polymerase alpha chain family. In terms of assembly, homodimer. The RNAP catalytic core consists of 2 alpha, 1 beta, 1 beta' and 1 omega subunit. When a sigma factor is associated with the core the holoenzyme is formed, which can initiate transcription.

It catalyses the reaction RNA(n) + a ribonucleoside 5'-triphosphate = RNA(n+1) + diphosphate. Functionally, DNA-dependent RNA polymerase catalyzes the transcription of DNA into RNA using the four ribonucleoside triphosphates as substrates. This is DNA-directed RNA polymerase subunit alpha from Pelobacter propionicus (strain DSM 2379 / NBRC 103807 / OttBd1).